The chain runs to 341 residues: Phosphate acyltransferase (341 aa).

This sequence belongs to the PlsX family. As to quaternary structure, homodimer. Probably interacts with PlsY.

The protein resides in the cytoplasm. The catalysed reaction is a fatty acyl-[ACP] + phosphate = an acyl phosphate + holo-[ACP]. It participates in lipid metabolism; phospholipid metabolism. In terms of biological role, catalyzes the reversible formation of acyl-phosphate (acyl-PO(4)) from acyl-[acyl-carrier-protein] (acyl-ACP). This enzyme utilizes acyl-ACP as fatty acyl donor, but not acyl-CoA. This is Phosphate acyltransferase from Chlorobaculum parvum (strain DSM 263 / NCIMB 8327) (Chlorobium vibrioforme subsp. thiosulfatophilum).